A 119-amino-acid chain; its full sequence is Ribonuclease P protein component (119 aa).

The protein belongs to the RnpA family. As to quaternary structure, consists of a catalytic RNA component (M1 or rnpB) and a protein subunit.

The enzyme catalyses Endonucleolytic cleavage of RNA, removing 5'-extranucleotides from tRNA precursor.. Functionally, RNaseP catalyzes the removal of the 5'-leader sequence from pre-tRNA to produce the mature 5'-terminus. It can also cleave other RNA substrates such as 4.5S RNA. The protein component plays an auxiliary but essential role in vivo by binding to the 5'-leader sequence and broadening the substrate specificity of the ribozyme. The protein is Ribonuclease P protein component of Proteus mirabilis (strain HI4320).